The primary structure comprises 305 residues: tRNA uridine(34) hydroxylase (305 aa).

Positions 124–219 constitute a Rhodanese domain; sequence QDEETLVVDT…YLETIPKEES (96 aa). Cysteine 179 acts as the Cysteine persulfide intermediate in catalysis.

Belongs to the TrhO family.

The catalysed reaction is uridine(34) in tRNA + AH2 + O2 = 5-hydroxyuridine(34) in tRNA + A + H2O. Catalyzes oxygen-dependent 5-hydroxyuridine (ho5U) modification at position 34 in tRNAs. The polypeptide is tRNA uridine(34) hydroxylase (Bartonella bacilliformis (strain ATCC 35685 / KC583 / Herrer 020/F12,63)).